The chain runs to 500 residues: E3 ubiquitin-protein ligase TRIM69 (500 aa).

Residues 1–152 (MEVSTNPSSN…SVGQSKEFLQ (152 aa)) form a necessary for nuclear localization region. The RING-type zinc finger occupies 41–82 (CPLCNDWFRDPLMLSCGHNFCEACIQDFWRLQAKETFCPECK). The stretch at 161–255 (TEELAIQQGQ…QCLLAKDMLV (95 aa)) forms a coiled coil. The B30.2/SPRY domain maps to 305-500 (PIQYMVWREM…KEPLHILHPQ (196 aa)). S341 carries the post-translational modification Phosphoserine.

This sequence belongs to the TRIM/RBCC family. Homo-multimer; required for antiviral activity. Interacts with PML. Post-translationally, phosphorylated. Phosphorylation is necessary for nuclear localization.

Its subcellular location is the cytoplasm. The protein localises to the nucleus. The protein resides in the nucleus speckle. It localises to the cytoskeleton. It is found in the microtubule organizing center. Its subcellular location is the centrosome. The catalysed reaction is S-ubiquitinyl-[E2 ubiquitin-conjugating enzyme]-L-cysteine + [acceptor protein]-L-lysine = [E2 ubiquitin-conjugating enzyme]-L-cysteine + N(6)-ubiquitinyl-[acceptor protein]-L-lysine.. It functions in the pathway protein modification; protein ubiquitination. Functionally, E3 ubiquitin ligase that plays an important role in antiviral immunity by restricting different viral infections including dengue virus or vesicular stomatitis indiana virus. Ubiquitinates viral proteins such as dengue virus NS3 thereby limiting infection. In addition, acts as a key mediator of type I interferon induced microtubule stabilization by directly associating to microtubules independently of its E3 ligase activity. Also plays a role in cataract formation together with TP53. Mechanistically, inhibits UVB-induced cell apoptosis and reactive oxygen species (ROS) production by inducing TP53 ubiquitination. Regulates centrosome dynamics and mitotic progression by ubiquitinating STK3/MST2; leading to its redistribution to the perinuclear cytoskeleton and subsequent phosphorylation by PLK1. The sequence is that of E3 ubiquitin-protein ligase TRIM69 (TRIM69) from Homo sapiens (Human).